Here is a 361-residue protein sequence, read N- to C-terminus: Queuine tRNA-ribosyltransferase (361 aa).

Catalysis depends on Asp-89, which acts as the Proton acceptor. Residues 89–93 (DSGGF), Asp-143, Gln-185, and Gly-212 contribute to the substrate site. The segment at 243–249 (GVGTPED) is RNA binding. The active-site Nucleophile is the Asp-262. Residues 267 to 271 (TRNAR) form an RNA binding; important for wobble base 34 recognition region. 4 residues coordinate Zn(2+): Cys-300, Cys-302, Cys-305, and His-331.

The protein belongs to the queuine tRNA-ribosyltransferase family. As to quaternary structure, homodimer. Within each dimer, one monomer is responsible for RNA recognition and catalysis, while the other monomer binds to the replacement base PreQ1. It depends on Zn(2+) as a cofactor.

It carries out the reaction 7-aminomethyl-7-carbaguanine + guanosine(34) in tRNA = 7-aminomethyl-7-carbaguanosine(34) in tRNA + guanine. The protein operates within tRNA modification; tRNA-queuosine biosynthesis. In terms of biological role, catalyzes the base-exchange of a guanine (G) residue with the queuine precursor 7-aminomethyl-7-deazaguanine (PreQ1) at position 34 (anticodon wobble position) in tRNAs with GU(N) anticodons (tRNA-Asp, -Asn, -His and -Tyr). Catalysis occurs through a double-displacement mechanism. The nucleophile active site attacks the C1' of nucleotide 34 to detach the guanine base from the RNA, forming a covalent enzyme-RNA intermediate. The proton acceptor active site deprotonates the incoming PreQ1, allowing a nucleophilic attack on the C1' of the ribose to form the product. After dissociation, two additional enzymatic reactions on the tRNA convert PreQ1 to queuine (Q), resulting in the hypermodified nucleoside queuosine (7-(((4,5-cis-dihydroxy-2-cyclopenten-1-yl)amino)methyl)-7-deazaguanosine). The protein is Queuine tRNA-ribosyltransferase of Nitrosomonas eutropha (strain DSM 101675 / C91 / Nm57).